We begin with the raw amino-acid sequence, 227 residues long: Chaperone protein FocC (227 aa).

Residues 1 to 21 (MRIWAVLASFLVFFYIPQSYA) form the signal peptide.

It belongs to the periplasmic pilus chaperone family.

It localises to the periplasm. Involved in the biogenesis of the F1C fimbriae. The chain is Chaperone protein FocC (focC) from Escherichia coli O6:H1 (strain CFT073 / ATCC 700928 / UPEC).